The following is a 115-amino-acid chain: NAD(P)H-quinone oxidoreductase subunit M (115 aa).

The protein belongs to the complex I NdhM subunit family. In terms of assembly, NDH-1 can be composed of about 15 different subunits; different subcomplexes with different compositions have been identified which probably have different functions.

It localises to the cellular thylakoid membrane. It carries out the reaction a plastoquinone + NADH + (n+1) H(+)(in) = a plastoquinol + NAD(+) + n H(+)(out). It catalyses the reaction a plastoquinone + NADPH + (n+1) H(+)(in) = a plastoquinol + NADP(+) + n H(+)(out). In terms of biological role, NDH-1 shuttles electrons from an unknown electron donor, via FMN and iron-sulfur (Fe-S) centers, to quinones in the respiratory and/or the photosynthetic chain. The immediate electron acceptor for the enzyme in this species is believed to be plastoquinone. Couples the redox reaction to proton translocation, and thus conserves the redox energy in a proton gradient. Cyanobacterial NDH-1 also plays a role in inorganic carbon-concentration. In Prochlorococcus marinus (strain SARG / CCMP1375 / SS120), this protein is NAD(P)H-quinone oxidoreductase subunit M.